We begin with the raw amino-acid sequence, 332 residues long: Glycerol-3-phosphate dehydrogenase [NAD(P)+] (332 aa).

NADPH-binding residues include serine 11, phenylalanine 12, lysine 32, and lysine 106. Sn-glycerol 3-phosphate is bound by residues lysine 106, glycine 137, and serine 139. Position 141 (alanine 141) interacts with NADPH. Positions 192, 245, 255, 256, and 257 each coordinate sn-glycerol 3-phosphate. The Proton acceptor role is filled by lysine 192. NADPH is bound at residue arginine 256. Valine 280 and glutamate 282 together coordinate NADPH.

This sequence belongs to the NAD-dependent glycerol-3-phosphate dehydrogenase family.

It is found in the cytoplasm. It carries out the reaction sn-glycerol 3-phosphate + NAD(+) = dihydroxyacetone phosphate + NADH + H(+). It catalyses the reaction sn-glycerol 3-phosphate + NADP(+) = dihydroxyacetone phosphate + NADPH + H(+). It functions in the pathway membrane lipid metabolism; glycerophospholipid metabolism. Its function is as follows. Catalyzes the reduction of the glycolytic intermediate dihydroxyacetone phosphate (DHAP) to sn-glycerol 3-phosphate (G3P), the key precursor for phospholipid synthesis. This chain is Glycerol-3-phosphate dehydrogenase [NAD(P)+], found in Staphylococcus epidermidis (strain ATCC 12228 / FDA PCI 1200).